Reading from the N-terminus, the 773-residue chain is 5-methyltetrahydropteroyltriglutamate--homocysteine methyltransferase (773 aa).

5-methyltetrahydropteroyltri-L-glutamate-binding positions include 16–19 (RELK) and K116. Residues 437–439 (IGS) and E490 each bind L-homocysteine. L-methionine contacts are provided by residues 437-439 (IGS) and E490. 5-methyltetrahydropteroyltri-L-glutamate is bound by residues 521–522 (RC) and W567. Position 605 (D605) interacts with L-homocysteine. Residue D605 participates in L-methionine binding. Residue E611 coordinates 5-methyltetrahydropteroyltri-L-glutamate. H647, C649, and E671 together coordinate Zn(2+). Residue H700 is the Proton donor of the active site. C732 provides a ligand contact to Zn(2+).

It belongs to the vitamin-B12 independent methionine synthase family. Zn(2+) serves as cofactor.

The enzyme catalyses 5-methyltetrahydropteroyltri-L-glutamate + L-homocysteine = tetrahydropteroyltri-L-glutamate + L-methionine. Its pathway is amino-acid biosynthesis; L-methionine biosynthesis via de novo pathway; L-methionine from L-homocysteine (MetE route): step 1/1. Its function is as follows. Catalyzes the transfer of a methyl group from 5-methyltetrahydrofolate to homocysteine resulting in methionine formation. The protein is 5-methyltetrahydropteroyltriglutamate--homocysteine methyltransferase of Alkalilimnicola ehrlichii (strain ATCC BAA-1101 / DSM 17681 / MLHE-1).